Consider the following 417-residue polypeptide: NADH-quinone oxidoreductase subunit D (417 aa).

This sequence belongs to the complex I 49 kDa subunit family. As to quaternary structure, NDH-1 is composed of 14 different subunits. Subunits NuoB, C, D, E, F, and G constitute the peripheral sector of the complex.

It is found in the cell inner membrane. The enzyme catalyses a quinone + NADH + 5 H(+)(in) = a quinol + NAD(+) + 4 H(+)(out). Functionally, NDH-1 shuttles electrons from NADH, via FMN and iron-sulfur (Fe-S) centers, to quinones in the respiratory chain. The immediate electron acceptor for the enzyme in this species is believed to be ubiquinone. Couples the redox reaction to proton translocation (for every two electrons transferred, four hydrogen ions are translocated across the cytoplasmic membrane), and thus conserves the redox energy in a proton gradient. The sequence is that of NADH-quinone oxidoreductase subunit D from Legionella pneumophila (strain Corby).